A 728-amino-acid polypeptide reads, in one-letter code: 1,4-alpha-glucan branching enzyme GlgB (728 aa).

Catalysis depends on Asp-405, which acts as the Nucleophile. The active-site Proton donor is the Glu-458.

The protein belongs to the glycosyl hydrolase 13 family. GlgB subfamily. As to quaternary structure, monomer.

It carries out the reaction Transfers a segment of a (1-&gt;4)-alpha-D-glucan chain to a primary hydroxy group in a similar glucan chain.. It functions in the pathway glycan biosynthesis; glycogen biosynthesis. In terms of biological role, catalyzes the formation of the alpha-1,6-glucosidic linkages in glycogen by scission of a 1,4-alpha-linked oligosaccharide from growing alpha-1,4-glucan chains and the subsequent attachment of the oligosaccharide to the alpha-1,6 position. This chain is 1,4-alpha-glucan branching enzyme GlgB, found in Shigella boydii serotype 4 (strain Sb227).